A 1505-amino-acid chain; its full sequence is ABC transporter C family member 13 (1505 aa).

Helical transmembrane passes span 11–31 (EAAAAAAHAALLALALLLLLL), 54–68 (AVDGGLAAASSVGAW), 71–91 (AALACCGYALLAQVAALSYEV), 102–122 (ALLLPAVQALAWAALLALAMQ), 131–151 (FPVLVRVWWVVSFVLCVGIAY), 171–191 (MVANFASAPALGFLCLVGVMG), 313–333 (AFAAVNTIVSYVGPYLISYFV), 336–356 (LSGKIEFPHEGYILASVFFVA), 367–387 (WYLGVDVMGIHVKSGLTAMVY), 421–441 (AWYFHDIWMLPLQIILALAIL), 447–467 (IAMVSTLVATVLSIAASVPVA), and 534–554 (FVFWSSPIFVAVITFGTCILL). The ABC transmembrane type-1 1 domain maps to 314 to 589 (FAAVNTIVSY…FPDLISMIAQ (276 aa)). One can recognise an ABC transporter 1 domain in the interval 623–846 (ININDATFSW…GTDFNALVCA (224 aa)). 658 to 665 (GVIGSGKS) is an ATP binding site. Over residues 881 to 897 (DNLKNKVSNNEKPSSTR) the composition is skewed to polar residues. The interval 881–919 (DNLKNKVSNNEKPSSTRGIKEKKKKPEERKKKRSVQEEE) is disordered. The segment covering 904–919 (KKPEERKKKRSVQEEE) has biased composition (basic and acidic residues). Transmembrane regions (helical) follow at residues 940 to 960 (GTLIPLIILAQTMFQVLQIAS), 980 to 1000 (SVVLLVVYMSLAFGSSLFVFV), 1055 to 1077 (IAFRLGGFASTTIQLLGIVAVMS), 1081 to 1103 (WQVLILIVPMAVACMWMQRYYIA), 1149 to 1169 (LLDCFARPLFSSLAAIEWLCL), and 1174 to 1194 (LSTFVFAFCMAILVSFPPGTI). Positions 945-1215 (LIILAQTMFQ…GLNLNARMSR (271 aa)) constitute an ABC transmembrane type-1 2 domain. One can recognise an ABC transporter 2 domain in the interval 1262–1496 (IELVDLKVRY…KSSMFMQLVS (235 aa)). 1296–1303 (GRTGSGKS) provides a ligand contact to ATP.

This sequence belongs to the ABC transporter superfamily. ABCC family. Conjugate transporter (TC 3.A.1.208) subfamily.

The protein localises to the membrane. In terms of biological role, ABC transporter that may affect phytic acid transport and compartmentalization. May function directly or indirectly in removing phytic acid from the cytosol or in vesicle trafficking. Required for phytic acid accumulation in developing seeds. Phytic acid is the primary storage form of phosphorus in cereal grains and other plant seeds. The chain is ABC transporter C family member 13 from Oryza sativa subsp. indica (Rice).